A 499-amino-acid polypeptide reads, in one-letter code: Protein flp (499 aa).

The next 4 helical transmembrane spans lie at 6–26 (LYFLSISIIILVAISIAIYIT), 389–409 (FNIVTVLMTTLILLAFIFSAY), 433–453 (LTLCLCIAIALILYALPYLIL), and 471–491 (LTLTTAFIALFSMLITLLLIL).

The protein resides in the cell membrane. Its function is as follows. Its precise function is unknown. Has no penicillin-binding activity and is not involved in methicillin resistance. This chain is Protein flp (flp), found in Staphylococcus aureus (strain MRSA252).